We begin with the raw amino-acid sequence, 5218 residues long: HC-toxin synthetase (5218 aa).

The tract at residues 223–620 (SARAHEQDAN…VGRSDTQIKL (398 aa)) is adenylation 1. Residues 769–843 (MNDDSLLLTA…TAASCIKSAQ (75 aa)) form the Carrier 1 domain. S803 is subject to O-(pantetheine 4'-phosphoryl)serine. The interval 858–1154 (IPVSPIQKLF…GWFTTISPVY (297 aa)) is condensation 1. The interval 1338–1806 (EGVYPGSPMQ…LPIVSEHDTA (469 aa)) is epimerization. Residues 1828–2233 (SRKVVEHPQR…IGRKDTQVKM (406 aa)) form an adenylation 2 region. In terms of domain architecture, Carrier 2 spans 2379 to 2453 (ETTDTVEDRL…DMAKLFSHGQ (75 aa)). O-(pantetheine 4'-phosphoryl)serine is present on S2414. Positions 2531 to 2929 (EDVFPCTPMQ…MEQFGHNLQT (399 aa)) are condensation 2. Residues 2979–3386 (LEETAQSQPA…GRKDGQIKLR (408 aa)) form an adenylation 3 region. Positions 3532–3608 (QVLTTNESVL…DMAGQISFVQ (77 aa)) constitute a Carrier 3 domain. S3569 carries the O-(pantetheine 4'-phosphoryl)serine modification. The tract at residues 3649 to 4102 (EDVYPCTPLQ…PALSEAHLAE (454 aa)) is condensation 3. An adenylation 4 region spans residues 4134-4530 (RRAQQSPNSQ…NLYYVRRKDS (397 aa)). Residues 4666–4740 (THTQKLLRQL…AMSSLIDEHN (75 aa)) enclose the Carrier 4 domain. Residue S4701 is modified to O-(pantetheine 4'-phosphoryl)serine. The tract at residues 4785 to 5101 (TLPCTEYQQM…SAIREFIPQA (317 aa)) is condensation 4.

It belongs to the NRP synthetase family. Pantetheine 4'-phosphate serves as cofactor.

It participates in mycotoxin biosynthesis; HC-toxin biosynthesis. Its function is as follows. Non-ribosomal peptide synthetase, part of the diffuse TOX2 gene cluster that mediates the biosynthesis of the HC-toxin, cyclic tetrapeptide of structure cyclo(D-Pro-L-Ala-D-Ala-L-Aeo), where Aeo stands for 2-amino-9,10-epoxi-8-oxodecanoic acid. HC-toxin is a determinant of specificity and virulence in the interaction between the producing fungus and its host, maize. HTS1, contains four modules, one for each amino acid in HC-toxin, with the order of activation being most likely Pro, Ala, Ala, and Aeo. In addition, HTS1 has one epimerase domain between modules 1 and 2, which is responsible for epimerizing L-Pro to D-Pro. The absence of an epimerizing domain after module 3, for producing D-Ala, can be explained by the presence in the cluster of TOXG, an Ala racemase, which produces D-Ala for incorporation by HTS1 into HC-toxin. This Cochliobolus carbonum (Maize leaf spot fungus) protein is HC-toxin synthetase.